We begin with the raw amino-acid sequence, 324 residues long: Galactosylgalactosylxylosylprotein 3-beta-glucuronosyltransferase 2 (324 aa).

The Cytoplasmic portion of the chain corresponds to 1-2 (MK). The chain crosses the membrane as a helical; Signal-anchor for type II membrane protein span at residues 3–23 (SALCSRFFILLPWILIVIIML). The Lumenal portion of the chain corresponds to 24–324 (DVDPRRPAPQ…YHLDTVNIEV (301 aa)). The tract at residues 50–78 (SRVPLRRSSPGRDAAEKRNESRPQLQPEP) is disordered. Asparagine 68 carries an N-linked (GlcNAc...) asparagine glycan. UDP-alpha-D-glucuronate contacts are provided by residues 88–90 (PTY), aspartate 119, arginine 156, arginine 161, and 186–188 (DDD). Aspartate 188 lines the Mn(2+) pocket. The interaction with galactose moiety of substrate glycoprotein stretch occupies residues 235 to 244 (WREDRPFAID). The active-site Proton donor/acceptor is the glutamate 274. N-linked (GlcNAc...) asparagine glycosylation occurs at asparagine 293. 301-303 (HTR) contacts UDP-alpha-D-glucuronate.

The protein belongs to the glycosyltransferase 43 family. As to quaternary structure, homodimer. Requires Mn(2+) as cofactor. As to expression, expressed in brain, but not in liver and kidney.

It localises to the golgi apparatus membrane. The catalysed reaction is 3-O-(beta-D-galactosyl-(1-&gt;3)-beta-D-galactosyl-(1-&gt;4)-beta-D-xylosyl)-L-seryl-[protein] + UDP-alpha-D-glucuronate = 3-O-(beta-D-GlcA-(1-&gt;3)-beta-D-Gal-(1-&gt;3)-beta-D-Gal-(1-&gt;4)-beta-D-Xyl)-L-seryl-[protein] + UDP + H(+). It functions in the pathway protein modification; protein glycosylation. Involved in the biosynthesis of L2/HNK-1 carbohydrate epitope on both glycolipids and glycoproteins. The sequence is that of Galactosylgalactosylxylosylprotein 3-beta-glucuronosyltransferase 2 (B3gat2) from Mus musculus (Mouse).